Consider the following 291-residue polypeptide: Nucleotide-binding protein LJ_0866 (291 aa).

Residue 13–20 (GMSGAGKT) participates in ATP binding. 63–66 (DLRV) is a GTP binding site.

It belongs to the RapZ-like family.

Its function is as follows. Displays ATPase and GTPase activities. The protein is Nucleotide-binding protein LJ_0866 of Lactobacillus johnsonii (strain CNCM I-12250 / La1 / NCC 533).